We begin with the raw amino-acid sequence, 574 residues long: Actin-binding protein wsp1 (574 aa).

Residues 19-130 (IPKSTNKIIA…KKVLDKGCHP (112 aa)) enclose the WH1 domain. 3 disordered regions span residues 144-186 (KGSS…ELLN), 221-494 (AGTP…IAEL), and 517-574 (KSRK…DEWD). The segment covering 149–158 (HAPNNSNIQP) has biased composition (polar residues). Composition is skewed to pro residues over residues 230-240 (PPIPPSIPSSR) and 251-260 (PAPPPIPPPS). Composition is skewed to low complexity over residues 297-306 (SRVSAAALAA) and 324-335 (KPPIGNGSSNSS). The span at 352–368 (PLPPQGRSAPPPPPPRS) shows a compositional bias: pro residues. Ser386 is modified (phosphoserine). A compositionally biased stretch (pro residues) spans 415-485 (PPVPTPPSLP…PPPAPAPAPA (71 aa)). Residues 499-518 (GRANLMASIRASGGMDLLKS) form the WH2 domain. The span at 521-545 (VSASPSVASTKTSNPPVEAPPSNNL) shows a compositional bias: polar residues. Residues 563–574 (SDEEDEDDDEWD) show a composition bias toward acidic residues.

Interacts with vrp1.

Its subcellular location is the cytoplasm. It localises to the cytoskeleton. Its function is as follows. Has a role in regulating actin assembly, so regulating polarized growth. This Schizosaccharomyces pombe (strain 972 / ATCC 24843) (Fission yeast) protein is Actin-binding protein wsp1 (wsp1).